The following is a 214-amino-acid chain: Probable transaldolase (214 aa).

Residue Lys83 is the Schiff-base intermediate with substrate of the active site.

It belongs to the transaldolase family. Type 3B subfamily.

Its subcellular location is the cytoplasm. The catalysed reaction is D-sedoheptulose 7-phosphate + D-glyceraldehyde 3-phosphate = D-erythrose 4-phosphate + beta-D-fructose 6-phosphate. It participates in carbohydrate degradation; pentose phosphate pathway; D-glyceraldehyde 3-phosphate and beta-D-fructose 6-phosphate from D-ribose 5-phosphate and D-xylulose 5-phosphate (non-oxidative stage): step 2/3. Transaldolase is important for the balance of metabolites in the pentose-phosphate pathway. This chain is Probable transaldolase, found in Leptospira biflexa serovar Patoc (strain Patoc 1 / Ames).